A 253-amino-acid polypeptide reads, in one-letter code: RBPJ-interacting and tubulin-associated protein 1 (253 aa).

Disordered stretches follow at residues 30–89 (SPAR…KNKY), 127–175 (TPPA…LCVP), and 188–253 (HLTV…PPWK). A compositionally biased stretch (polar residues) spans 71-81 (SPSSRGSTPNL). The Nuclear localization signal signature appears at 81 to 97 (LTPRKKNKYRLIGHAPS). Residues 112–140 (RMAVGDAAKLRTLFWTPPATPRGSHTPCP) are interaction with RBPJ/RBPSUH. An interaction with tubulin region spans residues 140-253 (PRETPLRAIH…CPPKPKPPWK (114 aa)). A compositionally biased stretch (polar residues) spans 188–228 (HLTVPSTGHPASSAPQTNGPWSPRPNTSGATVQSPLVTSKA).

Belongs to the RITA family. As to quaternary structure, interacts with RBPJ/RBPSUH.

The protein resides in the cytoplasm. The protein localises to the nucleus. It localises to the cytoskeleton. Its subcellular location is the microtubule organizing center. It is found in the centrosome. In terms of biological role, tubulin-binding protein that acts as a negative regulator of Notch signaling pathway. Shuttles between the cytoplasm and the nucleus and mediates the nuclear export of RBPJ/RBPSUH, thereby preventing the interaction between RBPJ/RBPSUH and NICD product of Notch proteins (Notch intracellular domain), leading to down-regulate Notch-mediated transcription. May play a role in neurogenesis. This chain is RBPJ-interacting and tubulin-associated protein 1 (Rita1), found in Mus musculus (Mouse).